We begin with the raw amino-acid sequence, 178 residues long: Endothelin-2 (178 aa).

A signal peptide spans 1–26 (MVAMPTAWCSIALALLLALHEGKGQV). Residues 27 to 46 (AAAPDQPAPSHRARASHLRP) constitute a propeptide that is removed on maturation. 2 cysteine pairs are disulfide-bonded: Cys-49/Cys-63 and Cys-51/Cys-59. Residues 70-178 (VNTPGQTAPY…RPTHSRRWKR (109 aa)) constitute a propeptide that is removed on maturation. The endothelin-like stretch occupies residues 96–111 (CECSSGRDPACATFCH).

It belongs to the endothelin/sarafotoxin family.

It is found in the secreted. Endothelins are endothelium-derived vasoconstrictor peptides. The sequence is that of Endothelin-2 (EDN2) from Felis catus (Cat).